Reading from the N-terminus, the 666-residue chain is Protein-arginine deiminase type-4 (666 aa).

Ca(2+) is bound by residues asparagine 153, aspartate 155, aspartate 165, aspartate 168, aspartate 176, and aspartate 179. 2 positions are modified to citrulline: arginine 212 and arginine 218. Position 349 (glutamine 349) interacts with Ca(2+). The active site involves aspartate 350. Ca(2+) contacts are provided by glutamate 351, glutamate 353, aspartate 369, and serine 370. Citrulline occurs at positions 372, 374, and 383. Arginine 374 is a substrate binding site. Positions 407, 410, and 411 each coordinate Ca(2+). Active-site residues include histidine 471, aspartate 473, and cysteine 648.

Belongs to the protein arginine deiminase family. Ca(2+) serves as cofactor. Post-translationally, autocitrullination at Arg-372 and Arg-374 inactivates the enzyme. Epidermis.

The protein localises to the cytoplasm. The protein resides in the nucleus. It localises to the cytoplasmic granule. The enzyme catalyses L-arginyl-[protein] + H2O = L-citrullyl-[protein] + NH4(+). In terms of biological role, catalyzes the citrullination/deimination of arginine residues of proteins such as histones, thereby playing a key role in histone code and regulation of stem cell maintenance. Citrullinates histone H1 at 'Arg-54' (to form H1R54ci), histone H3 at 'Arg-2', 'Arg-8', 'Arg-17' and/or 'Arg-26' (to form H3R2ci, H3R8ci, H3R17ci, H3R26ci, respectively) and histone H4 at 'Arg-3' (to form H4R3ci). Acts as a key regulator of stem cell maintenance by mediating citrullination of histone H1: citrullination of 'Arg-54' of histone H1 (H1R54ci) results in H1 displacement from chromatin and global chromatin decondensation, thereby promoting pluripotency and stem cell maintenance. Promotes profound chromatin decondensation during the innate immune response to infection in neutrophils by mediating formation of H1R54ci. Required for the formation of neutrophil extracellular traps (NETs); NETs are mainly composed of DNA fibers and are released by neutrophils to bind pathogens during inflammation. Citrullination of histone H3 prevents their methylation by CARM1 and HRMT1L2/PRMT1 and represses transcription. Citrullinates EP300/P300 at 'Arg-2142', which favors its interaction with NCOA2/GRIP1. The polypeptide is Protein-arginine deiminase type-4 (Padi4) (Rattus norvegicus (Rat)).